The sequence spans 213 residues: Inactive ribonuclease-like protein 10 (213 aa).

An N-terminal signal peptide occupies residues 1-24 (MKLTLVQIFFMMLLLLLGLGMGLG). Asn-131 carries N-linked (GlcNAc...) asparagine glycosylation.

This sequence belongs to the pancreatic ribonuclease family. The N-terminus is blocked. Glycosylated. Male-specific expression in proximal caput of the epididymis.

The protein localises to the secreted. In terms of biological role, secreted proximal epididymal protein required for post-testicular sperm maturation and male fertility. May be involved in sperm adhesion to the egg zona pellucida. Does not have ribonuclease activity. The chain is Inactive ribonuclease-like protein 10 (RNASE10) from Equus caballus (Horse).